The sequence spans 150 residues: Profilin (150 aa).

This sequence belongs to the profilin family. Occurs in many kinds of cells as a complex with monomeric actin in a 1:1 ratio.

The protein resides in the cytoplasm. It localises to the cytoskeleton. Binds to actin and affects the structure of the cytoskeleton. At high concentrations, profilin prevents the polymerization of actin, whereas it enhances it at low concentrations. By binding to PIP2, it inhibits the formation of IP3 and DG. This Trypanosoma brucei brucei protein is Profilin.